Here is a 609-residue protein sequence, read N- to C-terminus: Arginine--tRNA ligase (609 aa).

A 'HIGH' region motif is present at residues 114 to 124; sequence VNPNKELHVGH.

The protein belongs to the class-I aminoacyl-tRNA synthetase family. As to quaternary structure, monomer.

The protein resides in the cytoplasm. The catalysed reaction is tRNA(Arg) + L-arginine + ATP = L-arginyl-tRNA(Arg) + AMP + diphosphate. The chain is Arginine--tRNA ligase from Deinococcus radiodurans (strain ATCC 13939 / DSM 20539 / JCM 16871 / CCUG 27074 / LMG 4051 / NBRC 15346 / NCIMB 9279 / VKM B-1422 / R1).